A 143-amino-acid polypeptide reads, in one-letter code: Putative pre-16S rRNA nuclease (143 aa).

This sequence belongs to the YqgF nuclease family.

Its subcellular location is the cytoplasm. Could be a nuclease involved in processing of the 5'-end of pre-16S rRNA. The sequence is that of Putative pre-16S rRNA nuclease from Mycoplasma capricolum subsp. capricolum (strain California kid / ATCC 27343 / NCTC 10154).